The sequence spans 207 residues: Ribonuclease HII (207 aa).

One can recognise an RNase H type-2 domain in the interval 12-201; that stretch reads DLVAGVDEVG…VRAAWEAREG (190 aa). A divalent metal cation-binding residues include aspartate 18, glutamate 19, and aspartate 110.

This sequence belongs to the RNase HII family. Requires Mn(2+) as cofactor. Mg(2+) serves as cofactor.

Its subcellular location is the cytoplasm. The enzyme catalyses Endonucleolytic cleavage to 5'-phosphomonoester.. Its function is as follows. Endonuclease that specifically degrades the RNA of RNA-DNA hybrids. The polypeptide is Ribonuclease HII (Pseudomonas putida (strain ATCC 47054 / DSM 6125 / CFBP 8728 / NCIMB 11950 / KT2440)).